A 1888-amino-acid polypeptide reads, in one-letter code: Tensin-1 (1888 aa).

Over residues Pro-21 to Ala-31 the composition is skewed to pro residues. The tract at residues Pro-21–Pro-45 is disordered. The Phorbol-ester/DAG-type zinc-finger motif lies at Thr-61 to Cys-108. Residues Gly-132–Val-174 form a disordered region. Low complexity predominate over residues Ser-154 to Ser-167. The Phosphatase tensin-type domain maps to Ser-175–Ser-347. Residues Asn-352 to Gly-478 enclose the C2 tensin-type domain. A phosphoserine mark is found at Ser-509 and Ser-535. The residue at position 537 (Tyr-537) is a Phosphotyrosine. 3 disordered regions span residues Lys-543 to Lys-608, Val-696 to Glu-722, and Arg-789 to Thr-854. A Phosphoserine modification is found at Ser-549. The span at Leu-571–Thr-584 shows a compositional bias: polar residues. A Phosphoserine modification is found at Ser-604. Ser-792 carries the post-translational modification Phosphoserine. Residues Arg-835–Ala-852 are compositionally biased toward polar residues. The residue at position 867 (Ser-867) is a Phosphoserine. Disordered regions lie at residues Pro-893 to Val-1077 and Glu-1109 to Leu-1555. Residues Pro-905–Ser-922 are compositionally biased toward low complexity. Residues Ser-930, Ser-935, and Ser-952 each carry the phosphoserine modification. Positions Gly-962 to Gly-986 are enriched in polar residues. Thr-1015 carries the post-translational modification Phosphothreonine. At Ser-1054 the chain carries Phosphoserine. A compositionally biased stretch (polar residues) spans Gln-1057–Arg-1069. Position 1058 is a phosphotyrosine (Tyr-1058). Phosphoserine occurs at positions 1062, 1118, and 1122. Over residues Glu-1169 to Ser-1179 the composition is skewed to basic and acidic residues. Residues Ser-1227–Ser-1239 are compositionally biased toward low complexity. Over residues Ala-1240 to Gly-1257 the composition is skewed to polar residues. Position 1279 is a phosphoserine (Ser-1279). Over residues Ser-1284–Ser-1300 the composition is skewed to low complexity. Residues Pro-1301–Ala-1322 show a composition bias toward polar residues. Ser-1321 is a glycosylation site (O-linked (GalNAc...) serine). Phosphoserine is present on Ser-1331. Thr-1343 bears the Phosphothreonine mark. The residue at position 1346 (Ser-1346) is a Phosphoserine. Thr-1420 is modified (phosphothreonine). Residue Ser-1423 is modified to Phosphoserine. Residues Asn-1436 to Val-1446 are compositionally biased toward polar residues. Phosphoserine occurs at positions 1448, 1463, and 1468. Positions Leu-1490–Phe-1507 are enriched in polar residues. The span at Ser-1518–Ala-1530 shows a compositional bias: low complexity. Phosphoserine occurs at positions 1535, 1547, 1554, and 1599. The SH2 domain occupies Trp-1616–Ser-1725. Ser-1741 carries the post-translational modification Phosphoserine. Residues Ala-1751–Gly-1885 enclose the PTB domain.

It belongs to the PTEN phosphatase protein family. In terms of assembly, binds to actin filaments and interacts with phosphotyrosine-containing proteins. Interacts with STARD8. Interacts with protein phosphatase PPP1CA. Interacts (via N-terminus) with Rho GTPase-activating protein DLC1; the interaction is decreased by phosphorylation of TNS1. Interacts with tyrosine-phosphorylated proteins BCAR1/p130Cas and PTK2/FAK; the interactions are increased by phosphorylation of TNS1. Extensively phosphorylated on serine and threonine residues in a p38 MAPK-dependent manner which reduces interaction with DLC1 and increases interaction with tyrosine-phosphorylated proteins including BCAR1/p130cas and PTK2/FAK. The majority of the phosphorylated Ser/Thr residues are immediately adjacent to a proline residue. Also phosphorylated on tyrosine residues. In terms of processing, rapidly cleaved by calpain II.

It is found in the cell surface. The protein localises to the cell junction. It localises to the focal adhesion. The protein resides in the cytoplasm. Its subcellular location is the cytoskeleton. Its function is as follows. May act as a protein phosphatase and/or a lipid phosphatase. Involved in fibrillar adhesion formation. Essential for myofibroblast differentiation and myofibroblast-mediated extracellular matrix deposition. Enhances RHOA activation in the presence of DLC1. Plays a role in cell polarization and migration. May be involved in cartilage development and in linking signal transduction pathways to the cytoskeleton. In Mus musculus (Mouse), this protein is Tensin-1.